A 102-amino-acid chain; its full sequence is MIHKLTSEERKTRLEGLPHWTAVPGRDAIQRSLRFADFNEAFGFMTRVAIKAQEMNHHPEWFNVYNRVDVTLSTHDADGLTERDIELAQFIDRVCAHTLPAA.

This sequence belongs to the pterin-4-alpha-carbinolamine dehydratase family.

It catalyses the reaction (4aS,6R)-4a-hydroxy-L-erythro-5,6,7,8-tetrahydrobiopterin = (6R)-L-erythro-6,7-dihydrobiopterin + H2O. The polypeptide is Putative pterin-4-alpha-carbinolamine dehydratase (Burkholderia vietnamiensis (strain G4 / LMG 22486) (Burkholderia cepacia (strain R1808))).